Reading from the N-terminus, the 345-residue chain is Large ribosomal subunit protein uL4 (345 aa).

A2 carries the post-translational modification N-acetylalanine.

The protein belongs to the universal ribosomal protein uL4 family.

The protein is Large ribosomal subunit protein uL4 (rpl-4) of Caenorhabditis elegans.